The primary structure comprises 1179 residues: Calcium-activated potassium channel subunit alpha-1 (1179 aa).

Positions 1–24 (MANGGGGGGGSSGGGGGGGGGGSG) are enriched in gly residues. A disordered region spans residues 1 to 62 (MANGGGGGGG…SSSSSSSSSV (62 aa)). The Extracellular portion of the chain corresponds to 1–87 (MANGGGGGGG…VPCDSRGQRM (87 aa)). A compositionally biased stretch (low complexity) spans 41-61 (SSSSSSSSSSSSSSSSSSSSS). Residues 88–108 (WWAFLASSMVTFFGGLFIILL) form a helical membrane-spanning segment. At 109–179 (WRTLKYLWTV…MISAQTLTGR (71 aa)) the chain is on the cytoplasmic side. S-palmitoyl cysteine attachment occurs at residues Cys119, Cys120, and Cys122. A helical transmembrane segment spans residues 180–200 (VLVVLVFALSIGALVIYFIDS). Residues 201–215 (SNPIESCQNFYKDFT) are Extracellular-facing. Residues 216 to 236 (LQIDMAFNVFFLLYFGLRFIA) traverse the membrane as a helical segment. Over 237 to 240 (ANDK) the chain is Cytoplasmic. A helical membrane pass occupies residues 241-261 (LWFWLEVNSVVDFFTVPPVFV). Topologically, residues 262-265 (SVYL) are extracellular. Residues 266–286 (NRSWLGLRFLRALRLIQFSEI) form a helical; Voltage-sensor membrane-spanning segment. The Cytoplasmic portion of the chain corresponds to 287 to 301 (LQFLNILKTSNSIKL). Residues 302–322 (VNLLSIFISTWLTAAGFIHLV) traverse the membrane as a helical segment. Residues 323 to 336 (ENSGDPWENFQNNQ) are Extracellular-facing. An intramembrane region (pore-forming) is located at residues 337–359 (ALTYWECVYLLMVTMSTVGYGDV). The short motif at 353 to 356 (TVGY) is the Selectivity for potassium element. Residues 360 to 368 (YAKTTLGRL) lie on the Extracellular side of the membrane. A helical transmembrane segment spans residues 369 to 389 (FMVFFILGGLAMFASYVPEII). Topologically, residues 390-1179 (ELIGNRKKYG…KQKYVQEERL (790 aa)) are cytoplasmic. Residues 408–550 (RKHIVVCGHI…WNWKEGDDAI (143 aa)) enclose the RCK N-terminal 1 domain. Glu440, Gln463, and Glu465 together coordinate Mg(2+). The interval 557-577 (LGFIAQSCLAQGLSTMLANLF) is segment S7. The segment at 614–634 (LSFPTVCELCFVKLKLLMIAI) is segment S8. Residues 678–682 (CKACH) are heme-binding motif. Positions 702 to 730 (EQPSTLSPKKKQRNGGMRNSPNSSPKLMR) are disordered. Thr706 carries the phosphothreonine modification. A phosphoserine mark is found at Ser708, Ser721, and Ser725. A segment S9 region spans residues 780–800 (VLSGHVVVCIFGDVSSALIGL). The RCK N-terminal 2 domain occupies 782–926 (SGHVVVCIFG…MDRSSPDNSP (145 aa)). The residue at position 913 (Thr913) is a Phosphothreonine. Phosphoserine occurs at positions 921 and 925. Residues 946–968 (TELVNDTNVQFLDQDDDDDPDTE) carry the Calcium bowl motif. Residues Gln955, Asp958, Asp961, and Asp963 each contribute to the Ca(2+) site. The segment at 975–995 (FACGTAFAVSVLDSLMSATYF) is segment S10. Residues 1129–1154 (RASLSHSSHSSQSSSKKSSSVHSIPS) are compositionally biased toward low complexity. A disordered region spans residues 1129–1179 (RASLSHSSHSSQSSSKKSSSVHSIPSTANRQNRPKSRESRDKQKYVQEERL). Over residues 1163-1179 (KSRESRDKQKYVQEERL) the composition is skewed to basic and acidic residues. Ser1164 and Ser1167 each carry phosphoserine.

Belongs to the potassium channel family. Calcium-activated (TC 1.A.1.3) subfamily. KCa1.1/KCNMA1 sub-subfamily. Homotetramer; which constitutes the calcium-activated potassium channel. Interacts with beta subunits KCNMB1, KCNMB2, KCNMB3 and KCNMB4. Interacts with gamma subunits LRRC26, LRRC38, LRRC52 and LRRC55. Beta and gamma subunits are accessory, and modulate its activity. Interacts with RAB11B. Phosphorylated. Phosphorylation by kinases such as PKA and/or PKG. In smooth muscles, phosphorylation affects its activity. In terms of processing, palmitoylation by ZDHHC22 and ZDHHC23 within the intracellular linker between the S0 and S1 transmembrane domains regulates localization to the plasma membrane. Depalmitoylated by LYPLA1 and LYPLAL1, leading to retard exit from the trans-Golgi network.

The protein resides in the cell membrane. Its subcellular location is the endoplasmic reticulum membrane. The enzyme catalyses K(+)(in) = K(+)(out). Its activity is regulated as follows. Ethanol and carbon monoxide-bound heme increase channel activation. Heme inhibits channel activation. Potassium channel activated by both membrane depolarization or increase in cytosolic Ca(2+) that mediates export of K(+). It is also activated by the concentration of cytosolic Mg(2+). Its activation dampens the excitatory events that elevate the cytosolic Ca(2+) concentration and/or depolarize the cell membrane. It therefore contributes to repolarization of the membrane potential. Plays a key role in controlling excitability in a number of systems, such as regulation of the contraction of smooth muscle, the tuning of hair cells in the cochlea, regulation of transmitter release, and innate immunity. In smooth muscles, its activation by high level of Ca(2+), caused by ryanodine receptors in the sarcoplasmic reticulum, regulates the membrane potential. In cochlea cells, its number and kinetic properties partly determine the characteristic frequency of each hair cell and thereby helps to establish a tonotopic map. Kinetics of KCNMA1 channels are determined by alternative splicing, phosphorylation status and its combination with modulating beta subunits. Highly sensitive to both iberiotoxin (IbTx) and charybdotoxin (CTX). In terms of biological role, potassium channel activated by both membrane depolarization or increase in cytosolic Ca(2+) that mediates export of K(+). This is Calcium-activated potassium channel subunit alpha-1 (KCNMA1) from Oryctolagus cuniculus (Rabbit).